The primary structure comprises 272 residues: Tumor necrosis factor receptor superfamily member 4 (272 aa).

Residues 1–19 (MYVWVQQPTALLLLALTLG) form the signal peptide. Topologically, residues 20–211 (VTARRLNCVK…PPTLVTPEGP (192 aa)) are extracellular. TNFR-Cys repeat units follow at residues 26-61 (NCVK…TLCH) and 62-103 (PCET…DTVC). Disulfide bonds link cysteine 27/cysteine 38, cysteine 39/cysteine 52, cysteine 42/cysteine 60, cysteine 63/cysteine 77, cysteine 80/cysteine 95, cysteine 83/cysteine 103, cysteine 105/cysteine 123, and cysteine 126/cysteine 139. A TNFR-Cys 3; truncated repeat occupies 104-124 (RCRPGTQPRQDSGYKLGVDCV). The TNFR-Cys 4 repeat unit spans residues 125-165 (PCPPGHFSPGNNQACKPWTNCTLSGKQTRHPASDSLDAVCE). Asparagine 144 carries an N-linked (GlcNAc...) asparagine glycan. The cysteines at positions 145 and 164 are disulfide-linked. The chain crosses the membrane as a helical span at residues 212 to 236 (AFAVLLGLGLGLLAPLTVLLALYLL). The Cytoplasmic segment spans residues 237–272 (RKAWRLPNTPKPCWGNSFRTPIQEEHTDAHFTLAKI).

As to quaternary structure, interacts with TRAF2, TRAF3 and TRAF5. In terms of tissue distribution, expressed in CD4(+) T-cells and in T-helper Th17 cells (at protein level).

The protein localises to the membrane. Receptor for TNFSF4/OX40L/GP34. Is a costimulatory molecule implicated in long-term T-cell immunity. This chain is Tumor necrosis factor receptor superfamily member 4 (Tnfrsf4), found in Mus musculus (Mouse).